The following is a 460-amino-acid chain: Serine--tRNA ligase (460 aa).

Positions 43–66 are enriched in basic and acidic residues; it reads AEGDGLRQERNEVSSKIGELKQDG. Residues 43 to 81 form a disordered region; sequence AEGDGLRQERNEVSSKIGELKQDGKDEEAQEAIDRSQEL. Residue 242–244 coordinates L-serine; that stretch reads TAE. ATP is bound by residues 273 to 275 and Val289; that span reads RRE. L-serine is bound at residue Glu296. 369–372 serves as a coordination point for ATP; the sequence is EVSS. Ser405 contacts L-serine.

This sequence belongs to the class-II aminoacyl-tRNA synthetase family. Type-1 seryl-tRNA synthetase subfamily. Homodimer. The tRNA molecule binds across the dimer.

The protein localises to the cytoplasm. It carries out the reaction tRNA(Ser) + L-serine + ATP = L-seryl-tRNA(Ser) + AMP + diphosphate + H(+). The enzyme catalyses tRNA(Sec) + L-serine + ATP = L-seryl-tRNA(Sec) + AMP + diphosphate + H(+). It participates in aminoacyl-tRNA biosynthesis; selenocysteinyl-tRNA(Sec) biosynthesis; L-seryl-tRNA(Sec) from L-serine and tRNA(Sec): step 1/1. Catalyzes the attachment of serine to tRNA(Ser). Is also probably able to aminoacylate tRNA(Sec) with serine, to form the misacylated tRNA L-seryl-tRNA(Sec), which will be further converted into selenocysteinyl-tRNA(Sec). In Haloarcula marismortui (strain ATCC 43049 / DSM 3752 / JCM 8966 / VKM B-1809) (Halobacterium marismortui), this protein is Serine--tRNA ligase (serS).